Consider the following 156-residue polypeptide: ATP synthase subunit b (156 aa).

The helical transmembrane segment at 11–31 threads the bilayer; sequence LIAFVVFVIFCMKYVWPPIIG.

Belongs to the ATPase B chain family. F-type ATPases have 2 components, F(1) - the catalytic core - and F(0) - the membrane proton channel. F(1) has five subunits: alpha(3), beta(3), gamma(1), delta(1), epsilon(1). F(0) has three main subunits: a(1), b(2) and c(10-14). The alpha and beta chains form an alternating ring which encloses part of the gamma chain. F(1) is attached to F(0) by a central stalk formed by the gamma and epsilon chains, while a peripheral stalk is formed by the delta and b chains.

The protein resides in the cell inner membrane. In terms of biological role, f(1)F(0) ATP synthase produces ATP from ADP in the presence of a proton or sodium gradient. F-type ATPases consist of two structural domains, F(1) containing the extramembraneous catalytic core and F(0) containing the membrane proton channel, linked together by a central stalk and a peripheral stalk. During catalysis, ATP synthesis in the catalytic domain of F(1) is coupled via a rotary mechanism of the central stalk subunits to proton translocation. Component of the F(0) channel, it forms part of the peripheral stalk, linking F(1) to F(0). The protein is ATP synthase subunit b of Colwellia psychrerythraea (strain 34H / ATCC BAA-681) (Vibrio psychroerythus).